The sequence spans 310 residues: Aspartate carbamoyltransferase catalytic subunit (310 aa).

2 residues coordinate carbamoyl phosphate: R54 and T55. K84 provides a ligand contact to L-aspartate. Carbamoyl phosphate is bound by residues R105, H134, and Q137. L-aspartate-binding residues include R167 and R229. Carbamoyl phosphate contacts are provided by L267 and P268.

The protein belongs to the aspartate/ornithine carbamoyltransferase superfamily. ATCase family. Heterododecamer (2C3:3R2) of six catalytic PyrB chains organized as two trimers (C3), and six regulatory PyrI chains organized as three dimers (R2).

It catalyses the reaction carbamoyl phosphate + L-aspartate = N-carbamoyl-L-aspartate + phosphate + H(+). The protein operates within pyrimidine metabolism; UMP biosynthesis via de novo pathway; (S)-dihydroorotate from bicarbonate: step 2/3. In terms of biological role, catalyzes the condensation of carbamoyl phosphate and aspartate to form carbamoyl aspartate and inorganic phosphate, the committed step in the de novo pyrimidine nucleotide biosynthesis pathway. This chain is Aspartate carbamoyltransferase catalytic subunit, found in Enterobacter sp. (strain 638).